The sequence spans 569 residues: Glucose-6-phosphate isomerase, cytosolic 2A (569 aa).

The Proton donor role is filled by Glu360. Residues His391 and Lys516 contribute to the active site.

The protein belongs to the GPI family. As to quaternary structure, homodimer.

The protein localises to the cytoplasm. It carries out the reaction alpha-D-glucose 6-phosphate = beta-D-fructose 6-phosphate. It participates in carbohydrate degradation; glycolysis; D-glyceraldehyde 3-phosphate and glycerone phosphate from D-glucose: step 2/4. In Clarkia lewisii (Farewell-to-spring), this protein is Glucose-6-phosphate isomerase, cytosolic 2A (PGIC2-A).